A 475-amino-acid polypeptide reads, in one-letter code: Glutamate--tRNA ligase 1 (475 aa).

Positions 11–21 (PSPTGYLHIGG) match the 'HIGH' region motif. The short motif at 240-244 (KLSKR) is the 'KMSKS' region element. Position 243 (Lys243) interacts with ATP.

Belongs to the class-I aminoacyl-tRNA synthetase family. Glutamate--tRNA ligase type 1 subfamily. As to quaternary structure, monomer.

It is found in the cytoplasm. The enzyme catalyses tRNA(Glu) + L-glutamate + ATP = L-glutamyl-tRNA(Glu) + AMP + diphosphate. In terms of biological role, catalyzes the attachment of glutamate to tRNA(Glu) in a two-step reaction: glutamate is first activated by ATP to form Glu-AMP and then transferred to the acceptor end of tRNA(Glu). This is Glutamate--tRNA ligase 1 from Methylobacterium radiotolerans (strain ATCC 27329 / DSM 1819 / JCM 2831 / NBRC 15690 / NCIMB 10815 / 0-1).